A 56-amino-acid chain; its full sequence is Large ribosomal subunit protein bL33 (56 aa).

Belongs to the bacterial ribosomal protein bL33 family.

The polypeptide is Large ribosomal subunit protein bL33 (Rickettsia africae (strain ESF-5)).